The sequence spans 235 residues: Ribonuclease PH (235 aa).

Phosphate contacts are provided by residues Arg86 and 124–126 (GTR).

It belongs to the RNase PH family. As to quaternary structure, homohexameric ring arranged as a trimer of dimers.

It catalyses the reaction tRNA(n+1) + phosphate = tRNA(n) + a ribonucleoside 5'-diphosphate. Functionally, phosphorolytic 3'-5' exoribonuclease that plays an important role in tRNA 3'-end maturation. Removes nucleotide residues following the 3'-CCA terminus of tRNAs; can also add nucleotides to the ends of RNA molecules by using nucleoside diphosphates as substrates, but this may not be physiologically important. Probably plays a role in initiation of 16S rRNA degradation (leading to ribosome degradation) during starvation. The chain is Ribonuclease PH from Francisella tularensis subsp. holarctica (strain FTNF002-00 / FTA).